The chain runs to 721 residues: MQTQLGENDISLPQYYNNRELSWLDFNYRVLQEAYDKNNPLLEKLNFISIFSSNLDEFFMVRVAGLKDQVKMGYDKPENKAQMTPQEQVDAIQEKAKKYVDTQYERYNELMIELKDYEIVMCEPHELSEPLLSKLERDFKLTILPTLTPLGIDAYHPFPKLNNKSLNIFVDIDTEDAINSAIVQIPSLIPRFLTYNEGAKQYVVMVEDVITYFINYLFTGYEVLNTFTFRITRNADLTIHEDGAEDLLIEIERFLKERKSGSAVRLEVDGRTENPDDLDWLIETLEVDKQDVYFLNGPLDLTFIFGLVDHLSHKLNYLTYEKYSPQIPRSLGNNNLYELALKRDIFFHHPYESFEPIVDFIREAADDPNTIAIKQTLYRVSKDSPIIKSLKEAAEKGKQVTVLVELKARFDEENNVHWARMLEDAGCHVIYGMTHLKTHSKIALVVKRIGGELTSFVHLGTGNYNDKTAKLYTDMGIITTNEQIAEDAINFFNYLSGYSVKPEYNKLIVAPFDIRDVFIDRIDKEISSHLQHGNGKIMMKMNSLTDKAIIEKLFEASQAGVKIQLIIRGICCLKPGIPGISENIEVVSIVGRLLEHSRIYYFHNNGDERIYLSSADVMTRNMIKRVEILFPVEDKEIGKRLVDFMDLQLSDNQKGRYQDEHGHYHYVENNLSPLNSQVYLMQEAIKYGQELKKRSAQPSGMPVVSKRRANWMNRIRRSLKK.

Asn54 is an ATP binding site. Positions 379 and 409 each coordinate Mg(2+). A PLD phosphodiesterase domain is found at Thr434–Thr468. His439 serves as the catalytic Phosphohistidine intermediate. Tyr472, Arg568, and His596 together coordinate ATP.

This sequence belongs to the polyphosphate kinase 1 (PPK1) family. It depends on Mg(2+) as a cofactor. Post-translationally, an intermediate of this reaction is the autophosphorylated ppk in which a phosphate is covalently linked to a histidine residue through a N-P bond.

The catalysed reaction is [phosphate](n) + ATP = [phosphate](n+1) + ADP. Its function is as follows. Catalyzes the reversible transfer of the terminal phosphate of ATP to form a long-chain polyphosphate (polyP). The chain is Polyphosphate kinase from Staphylococcus haemolyticus (strain JCSC1435).